The primary structure comprises 194 residues: HTH-type nicotine-responsive transcriptional repressor HdnoR (194 aa).

The region spanning 6–66 (VDRRQQLIDA…AAAAELLQQL (61 aa)) is the HTH tetR-type domain. A DNA-binding region (H-T-H motif) is located at residues 29-48 (SLRTIASEAKASLAAVHVCF).

In terms of assembly, homodimer.

With respect to regulation, 6-hydroxy-D-nicotine and 6-hydroxy-L-nicotine prevent HdnoR from binding to the IR1 DNA. Both 6-hydroxy-nicotine enantiomers prevent DNA-protein complex formation at micromolar concentrations, with the D-enantiomer being twice as potent as the L-enantiomer. A thousand-fold higher L-nicotine concentration is required to elicit a similar effect. Functionally, represses expression of the 6-hydroxy-D-nicotine oxidase (6-hdno). Acts by binding to a gene operator site consisting of two inverted repeats, IR1 (covering the 6-hdno promoter region) and IR2 (situated upstream from the 6-hdno promoter). Binding to one site may stimulate binding of the protein to the second site. The sequence is that of HTH-type nicotine-responsive transcriptional repressor HdnoR from Paenarthrobacter nicotinovorans (Arthrobacter nicotinovorans).